Consider the following 658-residue polypeptide: DNA mismatch repair protein MutL (658 aa).

The span at 114–130 (RQEDSSHATQVKAEDGK) shows a compositional bias: basic and acidic residues. 2 disordered regions span residues 114–137 (RQED…PTAA) and 369–391 (DYPT…TAPM).

The protein belongs to the DNA mismatch repair MutL/HexB family.

In terms of biological role, this protein is involved in the repair of mismatches in DNA. It is required for dam-dependent methyl-directed DNA mismatch repair. May act as a 'molecular matchmaker', a protein that promotes the formation of a stable complex between two or more DNA-binding proteins in an ATP-dependent manner without itself being part of a final effector complex. In Neisseria meningitidis serogroup C (strain 053442), this protein is DNA mismatch repair protein MutL.